A 314-amino-acid polypeptide reads, in one-letter code: MGLLDSEPGSVLNVVSTALNDTVEFYRWTWSIADKRVENWPLMQSPWPTLSISTLYLLFVWLGPKWMKDREPFQMRLVLIIYNFGMVLLNLFIFRELFMGSYNAGYSYICQSVDYSNNVHEVRIAAALWWYFVSKGVEYLDTVFFILRKKNNQVSFLHVYHHCTMFTLWWIGIKWVAGGQAFFGAQLNSFIHVIMYSYYGLTAFGPWIQKYLWWKRYLTMLQLIQFHVTIGHTALSLYTDCPFPKWMHWALIAYAISFIFLFLNFYIRTYKEPKKPKAGKTAMNGISANGVSKSEKQLMIENGKKQKNGKAKGD.

Residue Asn-20 is glycosylated (N-linked (GlcNAc...) asparagine). The next 7 helical transmembrane spans lie at 42–62 (LMQS…FVWL), 78–98 (VLII…RELF), 127–147 (ALWW…FFIL), 165–185 (MFTL…FFGA), 188–208 (NSFI…GPWI), 217–237 (YLTM…ALSL), and 247–267 (MHWA…NFYI). Residues 275–314 (KPKAGKTAMNGISANGVSKSEKQLMIENGKKQKNGKAKGD) are disordered. Positions 293-304 (KSEKQLMIENGK) are enriched in basic and acidic residues. Residues 305–314 (KQKNGKAKGD) are compositionally biased toward basic residues. The Di-lysine motif signature appears at 310-314 (KAKGD).

The protein belongs to the ELO family. ELOVL4 subfamily. In terms of assembly, oligomer. In terms of processing, N-glycosylated. As to expression, expressed in the retina and at much lower level in the brain. Ubiquitous, highest expression in thymus, followed by testis, small intestine, ovary, and prostate. Little or no expression in heart, lung, liver, or leukocates.

Its subcellular location is the endoplasmic reticulum membrane. The enzyme catalyses a very-long-chain acyl-CoA + malonyl-CoA + H(+) = a very-long-chain 3-oxoacyl-CoA + CO2 + CoA. It catalyses the reaction tetracosanoyl-CoA + malonyl-CoA + H(+) = 3-oxohexacosanoyl-CoA + CO2 + CoA. It carries out the reaction hexacosanoyl-CoA + malonyl-CoA + H(+) = 3-oxooctacosanyol-CoA + CO2 + CoA. The catalysed reaction is octacosanoyl-CoA + malonyl-CoA + H(+) = 3-oxo-triacontanoyl-CoA + CO2 + CoA. The enzyme catalyses triacontanoyl-CoA + malonyl-CoA + H(+) = 3-oxo-dotriacontanoyl-CoA + CO2 + CoA. It catalyses the reaction (19Z,22Z,25Z,28Z,31Z)-tetratriacontapentaenoyl-CoA + malonyl-CoA + H(+) = 3-oxo-(21Z,24Z,27Z,30Z,33Z)-hexatriacontapentaenoyl-CoA + CO2 + CoA. It carries out the reaction (4Z,7Z,10Z,13Z,16Z,19Z)-docosahexaenoyl-CoA + malonyl-CoA + H(+) = 3-oxo-(6Z,9Z,12Z,15Z,18Z,21Z)-tetracosahexaenoyl-CoA + CO2 + CoA. The catalysed reaction is (7Z,10Z,13Z,16Z)-docosatetraenoyl-CoA + malonyl-CoA + H(+) = (9Z,12Z,15Z,18Z)-3-oxotetracosatetraenoyl-CoA + CO2 + CoA. The enzyme catalyses (11Z,14Z,17Z,20Z,23Z)-hexacosapentaenoyl-CoA + malonyl-CoA + H(+) = 3-oxo-(13Z,16Z,19Z,22Z,25Z)-octacosapentaenoyl-CoA + CO2 + CoA. It catalyses the reaction (13Z,16Z,19Z,22Z,25Z)-octacosapentaenoyl-CoA + malonyl-CoA + H(+) = 3-oxo-(15Z,18Z,21Z,24Z,27Z)-triacontapentaenoyl-CoA + CO2 + CoA. It carries out the reaction (15Z,18Z,21Z,24Z,27Z)-triacontapentaenoyl-CoA + malonyl-CoA + H(+) = 3-oxo-(17Z,20Z,23Z,26Z,29Z)-dotriacontapentaenoyl-CoA + CO2 + CoA. The catalysed reaction is (17Z,20Z,23Z,26Z,29Z)-dotriacontapentaenoyl-CoA + malonyl-CoA + H(+) = 3-oxo-(19Z,22Z,25Z,28Z,31Z)-tetratriacontapentaenoyl-CoA + CO2 + CoA. The enzyme catalyses (21Z,24Z,27Z,30Z,33Z)-hexatriacontapentaenoyl-CoA + malonyl-CoA + H(+) = 3-oxo-(23Z,26Z,29Z,32Z,35Z)-octatriacontapentaenoyl-CoA + CO2 + CoA. It catalyses the reaction (11Z,14Z,17Z,20Z)-hexacosatetraenoyl-CoA + malonyl-CoA + H(+) = (13Z,16Z,19Z,22Z)-3-oxooctacosatetraenoyl-CoA + CO2 + CoA. It carries out the reaction (13Z,16Z,19Z,22Z)-octacosatetraenoyl-CoA + malonyl-CoA + H(+) = 3-oxo-(15Z,18Z,21Z,24Z)-triacontatetraenoyl-CoA + CO2 + CoA. The catalysed reaction is (15Z,18Z,21Z,24Z)-triacontatetraenoyl-CoA + malonyl-CoA + H(+) = 3-oxo-(17Z,20Z,23Z,26Z)-dotriacontatetraenoyl-CoA + CO2 + CoA. The enzyme catalyses (17Z,20Z,23Z,26Z)-dotriacontatetraenoyl-CoA + malonyl-CoA + H(+) = 3-oxo-(19Z,22Z,25Z,28Z)-tetratriacontatetraenoyl-CoA + CO2 + CoA. It catalyses the reaction (19Z,22Z,25Z,28Z)-tetratriacontatetraenoyl-CoA + malonyl-CoA + H(+) = 3-oxo-(21Z,24Z,27Z,30Z)-hexatriacontatetraenoyl-CoA + CO2 + CoA. It carries out the reaction (21Z,24Z,27Z,30Z)-hexatriacontatetraenoyl-CoA + malonyl-CoA + H(+) = 3-oxo-(23Z,26Z,29Z,32Z)-octatriacontatetraenoyl-CoA + CO2 + CoA. The catalysed reaction is (6Z,9Z,12Z,15Z,18Z,21Z)-tetracosahexaenoyl-CoA + malonyl-CoA + H(+) = 3-oxo-(8Z,11Z,14Z,17Z,20Z,23Z)-hexacosahexaenoyl-CoA + CO2 + CoA. The enzyme catalyses (8Z,11Z,14Z,17Z,20Z,23Z)-hexacosahexaenoyl-CoA + malonyl-CoA + H(+) = 3-oxo-(10Z,13Z,16Z,19Z,22Z,25Z)-octacosahexaenoyl-CoA + CO2 + CoA. It catalyses the reaction (10Z,13Z,16Z,19Z,22Z,25Z)-octacosahexaenoyl-CoA + malonyl-CoA + H(+) = 3-oxo-(12Z,15Z,18Z,21Z,24Z,27Z)-triacontahexaenoyl-CoA + CO2 + CoA. It carries out the reaction (12Z,15Z,18Z,21Z,24Z,27Z)-triacontahexaenoyl-CoA + malonyl-CoA + H(+) = 3-oxo-(14Z,17Z,20Z,23Z,26Z,29Z)-dotriacontahexaenoyl-CoA + CO2 + CoA. The catalysed reaction is (14Z,17Z,20Z,23Z,26Z,29Z)-dotriacontahexaenoyl-CoA + malonyl-CoA + H(+) = 3-oxo-(16Z,19Z,22Z,25Z,28Z,31Z)-tetratriacontahexaenoyl-CoA + CO2 + CoA. The enzyme catalyses (16Z,19Z,22Z,25Z,28Z,31Z)-tetratriacontahexaenoyl-CoA + malonyl-CoA + H(+) = 3-oxo-(18Z,21Z,24Z,27Z,30Z,33Z)-hexatriacontahexaenoyl-CoA + CO2 + CoA. It catalyses the reaction (9Z,12Z,15Z,18Z,21Z)-tetracosapentaenoyl-CoA + malonyl-CoA + H(+) = 3-oxo-(11Z,14Z,17Z,20Z,23Z)-hexacosapentaenoyl-CoA + CO2 + CoA. It participates in lipid metabolism; fatty acid biosynthesis. Its function is as follows. Catalyzes the first and rate-limiting reaction of the four reactions that constitute the long-chain fatty acids elongation cycle. This endoplasmic reticulum-bound enzymatic process allows the addition of 2 carbons to the chain of long- and very long-chain fatty acids (VLCFAs) per cycle. Condensing enzyme that catalyzes the synthesis of very long chain saturated (VLC-SFA) and polyunsaturated (PUFA) fatty acids that are involved in multiple biological processes as precursors of membrane lipids and lipid mediators. May play a critical role in early brain and skin development. The protein is Very long chain fatty acid elongase 4 of Homo sapiens (Human).